The chain runs to 459 residues: Cysteine--tRNA ligase (459 aa).

Cys-29 is a Zn(2+) binding site. A 'HIGH' region motif is present at residues 31–41 (PTVYDRAHIGN). Residues Cys-209, His-234, and Glu-238 each coordinate Zn(2+). The 'KMSKS' region motif lies at 267-271 (KMSKS). Lys-270 serves as a coordination point for ATP.

This sequence belongs to the class-I aminoacyl-tRNA synthetase family. Monomer. It depends on Zn(2+) as a cofactor.

The protein localises to the cytoplasm. It carries out the reaction tRNA(Cys) + L-cysteine + ATP = L-cysteinyl-tRNA(Cys) + AMP + diphosphate. The chain is Cysteine--tRNA ligase from Rhodospirillum rubrum (strain ATCC 11170 / ATH 1.1.1 / DSM 467 / LMG 4362 / NCIMB 8255 / S1).